Reading from the N-terminus, the 648-residue chain is DNA polymerase (648 aa).

This sequence belongs to the DNA polymerase type-A family.

The catalysed reaction is DNA(n) + a 2'-deoxyribonucleoside 5'-triphosphate = DNA(n+1) + diphosphate. Replicates the viral genomic DNA. This polymerase possesses two enzymatic activities: DNA synthesis (polymerase) and an exonucleolytic activity that degrades single-stranded DNA in the 3'-5' direction. In Bacillus subtilis (Bacteriophage SP02), this protein is DNA polymerase (L).